The following is a 160-amino-acid chain: S-ribosylhomocysteine lyase (160 aa).

Fe cation-binding residues include His-57, His-61, and Cys-127.

This sequence belongs to the LuxS family. In terms of assembly, homodimer. It depends on Fe cation as a cofactor.

The catalysed reaction is S-(5-deoxy-D-ribos-5-yl)-L-homocysteine = (S)-4,5-dihydroxypentane-2,3-dione + L-homocysteine. Its function is as follows. Involved in the synthesis of autoinducer 2 (AI-2) which is secreted by bacteria and is used to communicate both the cell density and the metabolic potential of the environment. The regulation of gene expression in response to changes in cell density is called quorum sensing. Catalyzes the transformation of S-ribosylhomocysteine (RHC) to homocysteine (HC) and 4,5-dihydroxy-2,3-pentadione (DPD). The protein is S-ribosylhomocysteine lyase of Streptococcus uberis (strain ATCC BAA-854 / 0140J).